We begin with the raw amino-acid sequence, 338 residues long: Phenylalanine--tRNA ligase alpha subunit (338 aa).

Glu252 lines the Mg(2+) pocket.

Belongs to the class-II aminoacyl-tRNA synthetase family. Phe-tRNA synthetase alpha subunit type 1 subfamily. As to quaternary structure, tetramer of two alpha and two beta subunits. The cofactor is Mg(2+).

The protein localises to the cytoplasm. It catalyses the reaction tRNA(Phe) + L-phenylalanine + ATP = L-phenylalanyl-tRNA(Phe) + AMP + diphosphate + H(+). In Pseudomonas putida (strain ATCC 700007 / DSM 6899 / JCM 31910 / BCRC 17059 / LMG 24140 / F1), this protein is Phenylalanine--tRNA ligase alpha subunit.